A 441-amino-acid chain; its full sequence is Ribosomal protein uS12 methylthiotransferase RimO (441 aa).

An MTTase N-terminal domain is found at 5 to 116 (PTIAFTHLGC…IVDVMQRVEK (112 aa)). 6 residues coordinate [4Fe-4S] cluster: C14, C50, C79, C154, C158, and C161. The region spanning 140–370 (TTSEGVAYVR…EVQQSISWQQ (231 aa)) is the Radical SAM core domain. Positions 372–438 (QKLVGQLVDV…IYDLYGCLIS (67 aa)) constitute a TRAM domain.

The protein belongs to the methylthiotransferase family. RimO subfamily. The cofactor is [4Fe-4S] cluster.

Its subcellular location is the cytoplasm. The catalysed reaction is L-aspartate(89)-[ribosomal protein uS12]-hydrogen + (sulfur carrier)-SH + AH2 + 2 S-adenosyl-L-methionine = 3-methylsulfanyl-L-aspartate(89)-[ribosomal protein uS12]-hydrogen + (sulfur carrier)-H + 5'-deoxyadenosine + L-methionine + A + S-adenosyl-L-homocysteine + 2 H(+). Functionally, catalyzes the methylthiolation of an aspartic acid residue of ribosomal protein uS12. This Trichodesmium erythraeum (strain IMS101) protein is Ribosomal protein uS12 methylthiotransferase RimO.